A 191-amino-acid chain; its full sequence is Probable GTP-binding protein EngB (191 aa).

The 177-residue stretch at 13 to 189 (DRLEVAFAGR…RAEIVALLPD (177 aa)) folds into the EngB-type G domain. Residues 21-28 (GRSNVGKS), 48-52 (GRTRE), 67-70 (DLPG), 134-137 (TKTD), and 168-170 (TSS) contribute to the GTP site. Mg(2+)-binding residues include S28 and T50.

The protein belongs to the TRAFAC class TrmE-Era-EngA-EngB-Septin-like GTPase superfamily. EngB GTPase family. The cofactor is Mg(2+).

Its function is as follows. Necessary for normal cell division and for the maintenance of normal septation. The sequence is that of Probable GTP-binding protein EngB from Maricaulis maris (strain MCS10) (Caulobacter maris).